Here is a 497-residue protein sequence, read N- to C-terminus: MGSLEMVPMGAGPPSPGGDPDGDDGGNNSQYPSASGSSGNTPTPPNDEERESNEEPPPPYEDPYWGNGDRHSDYQPLGTQDQSLYLGLQHDGNDGLPPPPYSPRDDSSQHIYEEAGRGSMNPVCLPVIVAPYLFWLAAIAASCFTASVSTVVTATGLALSLLLLAAVASSYAAAQRKLLTPVTVLTAVVTFFAICLTWRIEDPPFNSLLFALLAAAGGLQGIYVLVMLVLLILAYRRRWRRLTVCGGIMFLACVLVLIVDAVLQLSPLLGAVTVVSMTLLLLAFVLWLSSPGGLGTLGAALLTLAAALALLASLILGTLNLTTMFLLMLLWTLVVLLICSSCSSCPLSKILLARLFLYALALLLLASALIAGGSILQTNFKSLSSTEFIPNLFCMLLLIVAGILFILAILTEWGSGNRTYGPVFMCLGGLLTMVAGAVWLTVMTNTLLSAWILTAGFLIFLIGFALFGVIRCCRYCCYYCLTLESEERPPTPYRNTV.

Positions Met-1–Ser-108 are disordered. Residues Met-1–Val-123 are Cytoplasmic-facing. Residues Asn-27–Thr-41 are compositionally biased toward polar residues. The PPxY motif motif lies at Pro-97–Tyr-101. Tyr-112 bears the Phosphotyrosine; by host mark. A helical transmembrane segment spans residues Cys-124–Phe-144. The Extracellular portion of the chain corresponds to Thr-145 to Ser-147. Residues Val-148–Ala-168 form a helical membrane-spanning segment. Residues Ser-169–Lys-177 lie on the Cytoplasmic side of the membrane. Residues Leu-178–Trp-198 traverse the membrane as a helical segment. The Extracellular portion of the chain corresponds to Arg-199–Ala-211. Residues Leu-212 to Ile-232 form a helical membrane-spanning segment. The Cytoplasmic portion of the chain corresponds to Leu-233 to Arg-241. Residues Leu-242–Val-262 traverse the membrane as a helical segment. At Leu-263–Pro-267 the chain is on the extracellular side. The chain crosses the membrane as a helical span at residues Leu-268–Leu-288. Topologically, residues Ser-289 to Thr-296 are cytoplasmic. Residues Leu-297–Gly-317 traverse the membrane as a helical segment. Thr-318 is a topological domain (extracellular). The helical transmembrane segment at Leu-319 to Cys-339 threads the bilayer. At Ser-340 to Arg-354 the chain is on the cytoplasmic side. A helical transmembrane segment spans residues Leu-355–Ile-375. Over Leu-376–Phe-388 the chain is Extracellular. A helical transmembrane segment spans residues Ile-389–Ile-409. The Cytoplasmic segment spans residues Leu-410–Pro-422. A helical transmembrane segment spans residues Val-423–Met-443. Topologically, residues Thr-444 to Ser-449 are extracellular. Residues Ala-450 to Ile-470 form a helical membrane-spanning segment. At Arg-471–Val-497 the chain is on the cytoplasmic side.

This sequence belongs to the herpesviridae LMP-2 family. As to quaternary structure, the cytoplasmic N-terminal domain interacts with human SRC family protein tyrosine kinases SYK and LYN. Binds human ITCH, WWP2 and NEDD4L. Post-translationally, phosphorylated on cytoplasmic N-terminal tyrosine residues, possibly by human LYN. In terms of processing, can be ubiquitinated by human ITCH and WWP2 on the N-terminus in a lysine-independent manner.

It localises to the host cell membrane. The protein localises to the host endomembrane system. Its subcellular location is the host cytoplasm. The protein resides in the host perinuclear region. Its function is as follows. Maintains EBV latent infection of B-lymphocyte, by preventing lytic reactivation of the virus in response to surface immunoglobulin (sIg) cross-linking. Acts like a dominant negative inhibitor of the sIg-associated protein tyrosine kinases, LYN and SYK. Also blocks translocation of the B-cell antigen receptor (BCR) into lipid rafts, preventing the subsequent signaling and accelerated internalization of the BCR upon BCR cross-linking. Serves as a molecular scaffold to recruit SYK, LYN and E3 protein-ubiquitin ligases, such as ITCH and NEDD4L, leading to ubiquitination and potential degradation of both tyrosines kinases. Possesses a constitutive signaling activity in non-transformed cells, inducing bypass of normal B lymphocyte developmental checkpoints allowing immunoglobulin-negative cells to colonize peripheral lymphoid organs. May be a negative regulator of isoform LMP2A. The chain is Latent membrane protein 2 (LMP2) from Homo sapiens (Human).